Reading from the N-terminus, the 349-residue chain is Ferredoxin--NADP reductase (349 aa).

7 residues coordinate FAD: Asp35, Gln43, Tyr48, Val88, Phe123, Asp288, and Thr329.

Belongs to the ferredoxin--NADP reductase type 2 family. As to quaternary structure, homodimer. Requires FAD as cofactor.

It carries out the reaction 2 reduced [2Fe-2S]-[ferredoxin] + NADP(+) + H(+) = 2 oxidized [2Fe-2S]-[ferredoxin] + NADPH. This Colwellia psychrerythraea (strain 34H / ATCC BAA-681) (Vibrio psychroerythus) protein is Ferredoxin--NADP reductase.